The primary structure comprises 815 residues: G-type lectin S-receptor-like serine/threonine-protein kinase SD1-1 (815 aa).

Residues 1–22 (MREIHSLFSLSLFLISSSLSVA) form the signal peptide. Topologically, residues 23-438 (LDYNVITPKE…FAKIEFKGRE (416 aa)) are extracellular. The Bulb-type lectin domain occupies 25–152 (YNVITPKEFL…EEAVLWQSFD (128 aa)). Residues asparagine 93, asparagine 249, and asparagine 265 are each glycosylated (N-linked (GlcNAc...) asparagine). The EGF-like domain occupies 288 to 326 (PEDECDYYSICGAYAVCGINSKNTPSCSCLQGFKPKSGR). 2 cysteine pairs are disulfide-bonded: cysteine 292/cysteine 304 and cysteine 298/cysteine 314. 2 N-linked (GlcNAc...) asparagine glycosylation sites follow: asparagine 329 and asparagine 385. Residues 345 to 428 (CEKKDAFVKF…FGQDVYIRMG (84 aa)) form the PAN domain. 2 cysteine pairs are disulfide-bonded: cysteine 378–cysteine 403 and cysteine 382–cysteine 388. A helical membrane pass occupies residues 439–459 (VVGMVVGSVVAIAVVLVVVFA). Residues 460–815 (CFRKKIMKRY…EVSITMLQGR (356 aa)) are Cytoplasmic-facing. Positions 500 to 783 (FSYVNFLGRG…SDSSLPHPTQ (284 aa)) constitute a Protein kinase domain. ATP contacts are provided by residues 506-514 (LGRGGFGPV) and lysine 528. At serine 534 the chain carries Phosphoserine. The caM-binding stretch occupies residues 589–606 (RRSTELDWKKRMNIINGV). Aspartate 625 acts as the Proton acceptor in catalysis. Position 642 is a phosphoserine (serine 642). Threonine 659 bears the Phosphothreonine mark. A phosphoserine mark is found at serine 797 and serine 803. A Phosphothreonine modification is found at threonine 810.

The protein belongs to the protein kinase superfamily. Ser/Thr protein kinase family. As to quaternary structure, interacts with PUB9, PUB13 and PUB14.

Its subcellular location is the cell membrane. The catalysed reaction is L-seryl-[protein] + ATP = O-phospho-L-seryl-[protein] + ADP + H(+). The enzyme catalyses L-threonyl-[protein] + ATP = O-phospho-L-threonyl-[protein] + ADP + H(+). This is G-type lectin S-receptor-like serine/threonine-protein kinase SD1-1 (SD11) from Arabidopsis thaliana (Mouse-ear cress).